We begin with the raw amino-acid sequence, 258 residues long: Protein SAWADEE HOMEODOMAIN HOMOLOG 1 (258 aa).

The interval 138 to 244 (AWYDVSSFLT…LVRYELDNTE (107 aa)) is SAWADEE domain. 4 residues coordinate Zn(2+): cysteine 191, histidine 225, cysteine 230, and cysteine 232.

In terms of assembly, associates with the RNA polymerase IV (Pol IV) complex. Interacts with NRPD1, NRPD2, NRPD3, NRPD3B, CLSY1 and CLSY2.

It localises to the nucleus. Involved in RNA-directed DNA methylation (RdDM). Required for the silencing of some endogenous RdDM targets and accumulation of 24-nt siRNAs, but not for the production of Pol V-dependent transcripts. Functions in transcriptional silencing through both DNA methylation-dependent and -independent pathways. Required for both maintenance and de-novo DNA methylation. Plays a role in the recruitment of Pol IV to genomic regions associated with K9 methylated histone H3 that are targets for RdDM. The protein is Protein SAWADEE HOMEODOMAIN HOMOLOG 1 (SHH1) of Arabidopsis thaliana (Mouse-ear cress).